Consider the following 158-residue polypeptide: Ribosome maturation factor RimP (158 aa).

The protein belongs to the RimP family.

Its subcellular location is the cytoplasm. In terms of biological role, required for maturation of 30S ribosomal subunits. This Lactobacillus acidophilus (strain ATCC 700396 / NCK56 / N2 / NCFM) protein is Ribosome maturation factor RimP.